The chain runs to 199 residues: Large ribosomal subunit protein bL17 (199 aa).

Residues 123-199 (DEANRARRAA…EESEAKDDTK (77 aa)) form a disordered region. Residues 137–152 (KADERADEKADEKAEE) are compositionally biased toward basic and acidic residues. Residues 153–199 (TVEETTEAPAEESTEAAAEETVEETTEAPAEESTEAAEESEAKDDTK) are compositionally biased toward acidic residues.

Belongs to the bacterial ribosomal protein bL17 family. In terms of assembly, part of the 50S ribosomal subunit. Contacts protein L32.

The polypeptide is Large ribosomal subunit protein bL17 (Mycolicibacterium smegmatis (strain ATCC 700084 / mc(2)155) (Mycobacterium smegmatis)).